Consider the following 172-residue polypeptide: Large ribosomal subunit protein uL11m (172 aa).

It belongs to the universal ribosomal protein uL11 family.

It is found in the mitochondrion. The chain is Large ribosomal subunit protein uL11m (mrpl11) from Dictyostelium discoideum (Social amoeba).